A 99-amino-acid polypeptide reads, in one-letter code: Evasin P1162 (99 aa).

An N-terminal signal peptide occupies residues 1–28 (MEVKTFAFLQIAVCIAIGIELICAGTNA). 3 cysteine pairs are disulfide-bonded: Cys40–Cys59, Cys44–Cys61, and Cys55–Cys72. 4 N-linked (GlcNAc...) asparagine glycosylation sites follow: Asn43, Asn49, Asn58, and Asn85.

It localises to the secreted. Functionally, salivary chemokine-binding protein which binds to host chemokines CXCL1, CXCL2, CXCL3, CXCL5 and CXCL8. This is Evasin P1162 from Ixodes ricinus (Common tick).